The chain runs to 283 residues: CASP-like protein 4A3 (283 aa).

A disordered region spans residues 1–86; sequence MRSPAKTMPS…VEETPSPIVV (86 aa). Residues 1–135 are Cytoplasmic-facing; that stretch reads MRSPAKTMPS…SRREEVVKFS (135 aa). Residues 9–20 are compositionally biased toward low complexity; that stretch reads PSMSPSSVSTEK. The segment covering 50 to 79 has biased composition (basic and acidic residues); that stretch reads SLDHSSESEKEDAKSKPESRRNKNPGKVEE. A helical transmembrane segment spans residues 136–156; the sequence is ALGFRLSEVVLALISFSIMAA. Topologically, residues 157–174 are extracellular; that stretch reads DKTKGWSGDSFDRYKEYR. A helical membrane pass occupies residues 175–195; sequence FCLSVNVVAFVYSSFQACDLA. At 196–212 the chain is on the cytoplasmic side; that stretch reads YHLVKEKHLISHHLRPL. Residues 213-233 traverse the membrane as a helical segment; the sequence is FEFIIDQVLAYLLMSASTAAV. Residues 234-251 lie on the Extracellular side of the membrane; the sequence is TRVDDWVSNWGKDEFTEM. A helical membrane pass occupies residues 252–272; sequence ASASIAMSFLAFLAFAFSSLI. The Cytoplasmic portion of the chain corresponds to 273-283; it reads SGYNLFNQGSL.

It belongs to the Casparian strip membrane proteins (CASP) family. As to quaternary structure, homodimer and heterodimers.

Its subcellular location is the cell membrane. The chain is CASP-like protein 4A3 from Arabidopsis thaliana (Mouse-ear cress).